The following is a 215-amino-acid chain: MPFGTLYTRPFNPRSLAILAIAKANNLPLKIKTITSFKDATEEYLQLNPLGKIPTFVGADGYVLTESIAIALYDSNTTLLGTTGQEYASIIRWMAFGITEILPALGGWFNPLIGRANFNADNIYQSKDDTLARLKILDNHLCGREYLVGETLSLADLFVLGIVQGAFRFFLDKRWRDEHRNLSTWFERVHALPIVVDVAGPPVLAEYEMPIQPPK.

The 81-residue stretch at 2–82 folds into the GST N-terminal domain; sequence PFGTLYTRPF…YDSNTTLLGT (81 aa). Glutathione contacts are provided by K52 and E66. A substrate-binding site is contributed by K52. The GST C-terminal domain maps to 83–211; that stretch reads TGQEYASIIR…PVLAEYEMPI (129 aa).

Belongs to the GST superfamily. Glutathione serves as cofactor.

Its pathway is mycotoxin biosynthesis; sterigmatocystin biosynthesis. Glutathione S-transferase; part of the gene cluster that mediates the biosynthesis of sterigmatocystin (ST), a polyketide-derived furanocoumarin which is part of the most toxic and carcinogenic compounds among the known mycotoxins. The first step in the biosynthesis of sterigmatocystin is the production of hexanoate by the fatty acid synthase (FAS) units stcJ and stcK. The polyketide backbone is assembled by the non-reducing polyketide synthase stcA by condensation of the starter hexanoyl-CoA and 7 malonyl-CoA extender units followed by cyclization and release of norsolorinic acid. Norsolorinic acid is the first stable intermediate in the biosynthesis of sterigmatocystin and is converted into averantin (AVN) by the ketoreductase stcE which reduces the hexanoate ketone to an alcohol. Averantin is then oxidized into 5'-hydroxyaverantin (HAVN) by the cytochrome P450 monooxygenase stcF. 5'-hydroxyaverantin is further converted to 5'-oxyaverantin (OAVN) by the 5'-hydroxyaverantin dehydrogenase stcG. The next step is the conversion of OAVN into averufin (AVF) which is catalyzed by a yet to be identified enzyme. The cytochrome P450 monooxygenase stcB and the flavin-binding monooxygenase stcW are both required for the conversion of averufin to 1-hydroxyversicolorone. The esterase stcI probably catalyzes the formation of versiconal hemiacetal acetate from 1-hydroxyversicolorone. The oxydoreductase stcN then probably catalyzes the biosynthetic step from versiconal to versicolorin B (VERB). The next step is performed by the versicolorin B desaturase stcL to produce versicolorin A (VERA). The ketoreductase stcU and the cytochrome P450 monooxygenase stcS are involved in the conversion of versicolorin A to demethylsterigmatocystin. The Baeyer-Villiger oxidas stcQ and the reductase stcR might be involved in the biosynthetic step from versicolorin A to demethylsterigmatocystin. The final step in the biosynthesis of sterigmatocystin is the methylation of demethylsterigmatocystin catalyzed by the methyltransferase stcP. The sequence is that of Glutathione S-transferase stcT from Emericella nidulans (strain FGSC A4 / ATCC 38163 / CBS 112.46 / NRRL 194 / M139) (Aspergillus nidulans).